The chain runs to 169 residues: Ribosome maturation factor RimP (169 aa).

It belongs to the RimP family.

It is found in the cytoplasm. In terms of biological role, required for maturation of 30S ribosomal subunits. This chain is Ribosome maturation factor RimP, found in Streptomyces avermitilis (strain ATCC 31267 / DSM 46492 / JCM 5070 / NBRC 14893 / NCIMB 12804 / NRRL 8165 / MA-4680).